We begin with the raw amino-acid sequence, 196 residues long: Beta-crystallin A4 (196 aa).

Threonine 2 is modified (N-acetylthreonine). The segment at 2 to 11 (TLQCTKSAGH) is N-terminal arm. 2 consecutive Beta/gamma crystallin 'Greek key' domains span residues 12–51 (WRVV…KVLS) and 52–98 (GAWV…RPVA). The connecting peptide stretch occupies residues 99–104 (CANHRD). 2 consecutive Beta/gamma crystallin 'Greek key' domains span residues 105 to 146 (SRLT…HVQS) and 147 to 195 (GAWV…RRIQ).

As to quaternary structure, homo/heterodimer, or complexes of higher-order. The structure of beta-crystallin oligomers seems to be stabilized through interactions between the N-terminal arms.

Its function is as follows. Crystallins are the dominant structural components of the vertebrate eye lens. This chain is Beta-crystallin A4 (Cryba4), found in Rattus norvegicus (Rat).